An 881-amino-acid polypeptide reads, in one-letter code: Phosphoenolpyruvate carboxylase (881 aa).

Catalysis depends on residues H142 and K547.

This sequence belongs to the PEPCase type 1 family. Mg(2+) serves as cofactor.

It catalyses the reaction oxaloacetate + phosphate = phosphoenolpyruvate + hydrogencarbonate. Forms oxaloacetate, a four-carbon dicarboxylic acid source for the tricarboxylic acid cycle. The protein is Phosphoenolpyruvate carboxylase of Hahella chejuensis (strain KCTC 2396).